The following is a 318-amino-acid chain: Pheromone-regulated membrane protein 5 (318 aa).

Residues 75–98 form a helical membrane-spanning segment; the sequence is GTVFIVVGGIAGVIFLAILLWWVI. Ser129 is modified (phosphoserine). Residues 238-247 are compositionally biased toward low complexity; the sequence is TISSSSASSL. Residues 238 to 318 are disordered; it reads TISSSSASSL…HMLEGKEQDE (81 aa). A compositionally biased stretch (basic and acidic residues) spans 250-261; it reads GNEKEVGEDIRK. The segment covering 276–285 has biased composition (polar residues); that stretch reads SPESDGSVNR. Residues Ser279, Ser282, and Ser288 each carry the phosphoserine modification. Residues 309–318 show a composition bias toward basic and acidic residues; the sequence is HMLEGKEQDE. Residue Lys314 forms a Glycyl lysine isopeptide (Lys-Gly) (interchain with G-Cter in ubiquitin) linkage.

The protein belongs to the PRM5 family.

It localises to the membrane. The protein is Pheromone-regulated membrane protein 5 (PRM5) of Saccharomyces cerevisiae (strain ATCC 204508 / S288c) (Baker's yeast).